Here is a 436-residue protein sequence, read N- to C-terminus: 3-ketoacyl-CoA thiolase (436 aa).

Cys-99 (acyl-thioester intermediate) is an active-site residue. Catalysis depends on proton acceptor residues His-392 and Cys-422.

It belongs to the thiolase-like superfamily. Thiolase family. Heterotetramer of two alpha chains (FadJ) and two beta chains (FadI).

The protein localises to the cytoplasm. The catalysed reaction is an acyl-CoA + acetyl-CoA = a 3-oxoacyl-CoA + CoA. Its pathway is lipid metabolism; fatty acid beta-oxidation. Catalyzes the final step of fatty acid oxidation in which acetyl-CoA is released and the CoA ester of a fatty acid two carbons shorter is formed. This is 3-ketoacyl-CoA thiolase from Shewanella sp. (strain W3-18-1).